Here is a 106-residue protein sequence, read N- to C-terminus: Vacuolar ATPase assembly integral membrane protein VMA21 homolog (106 aa).

A disordered region spans residues 1–26 (MSNKNKKSGGAGNGAAQKQTRQQSHD). At 1–32 (MSNKNKKSGGAGNGAAQKQTRQQSHDSQDYSS) the chain is on the cytoplasmic side. The helical transmembrane segment at 33–53 (FKIVLFYCMLIVFLPVVTFFL) threads the bilayer. Residues 54–69 (LKGFVLDRFFSLSEVK) lie on the Lumenal side of the membrane. The chain crosses the membrane as a helical span at residues 70-90 (VNIASAVGAVVSLHIALGLYI). The Cytoplasmic segment spans residues 91–106 (YRAYFGATGSKAVKED).

The protein belongs to the VMA21 family.

Its subcellular location is the endoplasmic reticulum membrane. It is found in the endoplasmic reticulum-Golgi intermediate compartment membrane. The protein localises to the cytoplasmic vesicle. It localises to the COPII-coated vesicle membrane. Required for the assembly of the V0 complex of the vacuolar ATPase (V-ATPase) in the endoplasmic reticulum. This is Vacuolar ATPase assembly integral membrane protein VMA21 homolog from Drosophila ananassae (Fruit fly).